Consider the following 164-residue polypeptide: ATP synthase subunit b (164 aa).

Residues 6-26 form a helical membrane-spanning segment; the sequence is GELVGNFILVTGSVIVLLLLI.

This sequence belongs to the ATPase B chain family. F-type ATPases have 2 components, F(1) - the catalytic core - and F(0) - the membrane proton channel. F(1) has five subunits: alpha(3), beta(3), gamma(1), delta(1), epsilon(1). F(0) has three main subunits: a(1), b(2) and c(10-14). The alpha and beta chains form an alternating ring which encloses part of the gamma chain. F(1) is attached to F(0) by a central stalk formed by the gamma and epsilon chains, while a peripheral stalk is formed by the delta and b chains.

It is found in the cell membrane. Its function is as follows. F(1)F(0) ATP synthase produces ATP from ADP in the presence of a proton or sodium gradient. F-type ATPases consist of two structural domains, F(1) containing the extramembraneous catalytic core and F(0) containing the membrane proton channel, linked together by a central stalk and a peripheral stalk. During catalysis, ATP synthesis in the catalytic domain of F(1) is coupled via a rotary mechanism of the central stalk subunits to proton translocation. Functionally, component of the F(0) channel, it forms part of the peripheral stalk, linking F(1) to F(0). In Streptococcus pyogenes serotype M3 (strain ATCC BAA-595 / MGAS315), this protein is ATP synthase subunit b.